The following is a 338-amino-acid chain: Glycerol-3-phosphate dehydrogenase [NAD(P)+] (338 aa).

NADPH is bound by residues Ser14, Tyr15, His35, and Lys109. The sn-glycerol 3-phosphate site is built by Lys109, Gly138, and Thr140. An NADPH-binding site is contributed by Ala142. Residues Lys194, Asp247, Ser257, Arg258, and Asn259 each contribute to the sn-glycerol 3-phosphate site. Lys194 (proton acceptor) is an active-site residue. Arg258 provides a ligand contact to NADPH. Residues Val282 and Glu284 each contribute to the NADPH site.

It belongs to the NAD-dependent glycerol-3-phosphate dehydrogenase family.

The protein resides in the cytoplasm. It carries out the reaction sn-glycerol 3-phosphate + NAD(+) = dihydroxyacetone phosphate + NADH + H(+). The enzyme catalyses sn-glycerol 3-phosphate + NADP(+) = dihydroxyacetone phosphate + NADPH + H(+). It functions in the pathway membrane lipid metabolism; glycerophospholipid metabolism. Catalyzes the reduction of the glycolytic intermediate dihydroxyacetone phosphate (DHAP) to sn-glycerol 3-phosphate (G3P), the key precursor for phospholipid synthesis. The chain is Glycerol-3-phosphate dehydrogenase [NAD(P)+] from Shewanella frigidimarina (strain NCIMB 400).